The sequence spans 284 residues: D-tagatose-1,6-bisphosphate aldolase subunit GatY (284 aa).

The Proton donor role is filled by aspartate 82. Zn(2+)-binding residues include histidine 83 and histidine 180. Position 181 (glycine 181) interacts with dihydroxyacetone phosphate. Histidine 208 provides a ligand contact to Zn(2+). Dihydroxyacetone phosphate is bound by residues 209–211 and 230–233; these read GAS and NVAT.

The protein belongs to the class II fructose-bisphosphate aldolase family. TagBP aldolase GatY subfamily. In terms of assembly, forms a complex with GatZ. Zn(2+) serves as cofactor.

The catalysed reaction is D-tagatofuranose 1,6-bisphosphate = D-glyceraldehyde 3-phosphate + dihydroxyacetone phosphate. The protein operates within carbohydrate metabolism; D-tagatose 6-phosphate degradation; D-glyceraldehyde 3-phosphate and glycerone phosphate from D-tagatose 6-phosphate: step 2/2. In terms of biological role, catalytic subunit of the tagatose-1,6-bisphosphate aldolase GatYZ, which catalyzes the reversible aldol condensation of dihydroxyacetone phosphate (DHAP or glycerone-phosphate) with glyceraldehyde 3-phosphate (G3P) to produce tagatose 1,6-bisphosphate (TBP). Requires GatZ subunit for full activity and stability. Is involved in the catabolism of galactitol. This Escherichia coli O8 (strain IAI1) protein is D-tagatose-1,6-bisphosphate aldolase subunit GatY.